The chain runs to 511 residues: TNF receptor-associated factor family protein DDB_G0290931 (511 aa).

The segment at 27–67 (CPICFELIYKKSIYQCSSGHYACQECWEKSLEIKQECMICR) adopts an RING-type; degenerate zinc-finger fold. A coiled-coil region spans residues 103–169 (IDGANQENED…RKLIKDEENG (67 aa)). The tract at residues 107-159 (NQENEDEENEDEENEDDEDENEDEENGEDDEDKDEDEENENENEENKDEENEK) is disordered. Over residues 109 to 155 (ENEDEENEDEENEDDEDENEDEENGEDDEDKDEDEENENENEENKDE) the composition is skewed to acidic residues. 2 TRAF-type zinc fingers span residues 181-234 (RHIQ…QVQL) and 236-293 (NHYD…SELQ). Positions 324–358 (ELLLKEIEKSKITCSELQRKNDELSSLITEIDDNY) form a coiled coil. The MATH domain maps to 374–499 (GYTNKWIISN…DDKLTINIYV (126 aa)).

The protein belongs to the TNF receptor-associated factor family. A subfamily.

It localises to the cytoplasm. Functionally, probable adapter protein and signal transducer that links members of the tumor necrosis factor receptor family to different signaling pathways by association with the receptor cytoplasmic domain and kinases. The polypeptide is TNF receptor-associated factor family protein DDB_G0290931 (Dictyostelium discoideum (Social amoeba)).